The chain runs to 241 residues: MNLLQDQPAMGIDQTTLEHLARQWEDLAPEAILAEAVRCFGDKLVLASAFGPESIILLDMLVKVWPRPQAFFLETGFHFPETLALKDRVLARFPQLQLEVVGPLMSVAQQNAIYGERLHDRNPDHCCAIRKVEPLNRALAPYKAWIAGMRREQSPTRGQIGVVQWDSRRGMVKFNPLATWTHKQVWAYIVERDLPYNPLHDEGFPSIGCSPLNCTAPVADGADPRSGRWRGKAKTECGLHA.

The tract at residues 221 to 241 (GADPRSGRWRGKAKTECGLHA) is disordered. Cys237 acts as the Nucleophile; cysteine thiosulfonate intermediate in catalysis.

Belongs to the PAPS reductase family. CysH subfamily.

The protein localises to the cytoplasm. It carries out the reaction [thioredoxin]-disulfide + sulfite + adenosine 3',5'-bisphosphate + 2 H(+) = [thioredoxin]-dithiol + 3'-phosphoadenylyl sulfate. It participates in sulfur metabolism; hydrogen sulfide biosynthesis; sulfite from sulfate: step 3/3. In terms of biological role, catalyzes the formation of sulfite from phosphoadenosine 5'-phosphosulfate (PAPS) using thioredoxin as an electron donor. In Gloeobacter violaceus (strain ATCC 29082 / PCC 7421), this protein is Phosphoadenosine 5'-phosphosulfate reductase.